We begin with the raw amino-acid sequence, 192 residues long: 3-hydroxyanthranilate 3,4-dioxygenase 1 (192 aa).

An O2-binding site is contributed by arginine 50. Fe cation contacts are provided by histidine 54, glutamate 60, and histidine 102. Residue glutamate 60 participates in substrate binding. Substrate is bound by residues arginine 106 and glutamate 116. 4 residues coordinate a divalent metal cation: cysteine 131, cysteine 134, cysteine 168, and cysteine 171.

Belongs to the 3-HAO family. It depends on Fe(2+) as a cofactor.

It localises to the cytoplasm. It carries out the reaction 3-hydroxyanthranilate + O2 = (2Z,4Z)-2-amino-3-carboxymuconate 6-semialdehyde. It participates in cofactor biosynthesis; NAD(+) biosynthesis; quinolinate from L-kynurenine: step 3/3. Catalyzes the oxidative ring opening of 3-hydroxyanthranilate to 2-amino-3-carboxymuconate semialdehyde, which spontaneously cyclizes to quinolinate. The chain is 3-hydroxyanthranilate 3,4-dioxygenase 1 (bna1-1) from Aspergillus clavatus (strain ATCC 1007 / CBS 513.65 / DSM 816 / NCTC 3887 / NRRL 1 / QM 1276 / 107).